A 228-amino-acid chain; its full sequence is 7-cyano-7-deazaguanine synthase (228 aa).

16–26 (FSGGQDSTTCL) serves as a coordination point for ATP. Zn(2+)-binding residues include Cys-193, Cys-201, Cys-204, and Cys-207.

This sequence belongs to the QueC family. Zn(2+) is required as a cofactor.

The enzyme catalyses 7-carboxy-7-deazaguanine + NH4(+) + ATP = 7-cyano-7-deazaguanine + ADP + phosphate + H2O + H(+). It functions in the pathway purine metabolism; 7-cyano-7-deazaguanine biosynthesis. Catalyzes the ATP-dependent conversion of 7-carboxy-7-deazaguanine (CDG) to 7-cyano-7-deazaguanine (preQ(0)). This chain is 7-cyano-7-deazaguanine synthase, found in Pasteurella multocida (strain Pm70).